We begin with the raw amino-acid sequence, 223 residues long: MKRN2 opposite strand protein (223 aa).

The sequence is that of MKRN2 opposite strand protein (MKRN2OS) from Homo sapiens (Human).